Consider the following 342-residue polypeptide: 6-hydroxytryprostatin B O-methyltransferase (342 aa).

Residue Asp201 coordinates S-adenosyl-L-methionine. The active-site Proton acceptor is His244.

Belongs to the class I-like SAM-binding methyltransferase superfamily. Cation-independent O-methyltransferase family. Homodimer.

It carries out the reaction 6-hydroxytryprostatin B + S-adenosyl-L-methionine = tryprostatin A + S-adenosyl-L-homocysteine + H(+). It functions in the pathway alkaloid biosynthesis. Functionally, 6-hydroxytryprostatin B O-methyltransferase; part of the gene cluster that mediates the biosynthesis of fumitremorgins, indole alkaloids that carry not only intriguing chemical structures, but also interesting biological and pharmacological activities. The biosynthesis of fumitremorgin-type alkaloids begins by condensation of the two amino acids L-tryptophan and L-proline to brevianamide F, catalyzed by the non-ribosomal peptide synthetase ftmA. Brevianamide F is then prenylated by the prenyltransferase ftmPT1/ftmB in the presence of dimethylallyl diphosphate, resulting in the formation of tryprostatin B. The three cytochrome P450 monooxygenases, ftmP450-1/ftmC, ftmP450-2/ftmE and ftmP450-3/FtmG, are responsible for the conversion of tryprostatin B to 6-hydroxytryprostatin B, tryprostatin A to fumitremorgin C and fumitremorgin C to 12,13-dihydroxyfumitremorgin C, respectively. The putative methyltransferase ftmMT/ftmD is expected for the conversion of 6-hydroxytryprostatin B to tryprostatin A. FtmPT2/FtmH catalyzes the prenylation of 12,13-dihydroxyfumitre-morgin C in the presence of dimethylallyl diphosphate, resulting in the formation of fumitremorgin B. Fumitremorgin B is further converted to verruculogen by ftmOx1/ftmF via the insertion of an endoperoxide bond between the two prenyl moieties. In some fungal species, verruculogen is further converted to fumitremorgin A, but the enzymes involved in this step have not been identified yet. This chain is 6-hydroxytryprostatin B O-methyltransferase, found in Aspergillus fumigatus (Neosartorya fumigata).